A 199-amino-acid chain; its full sequence is Peroxiredoxin-1 (199 aa).

The residue at position 2 (Ser-2) is an N-acetylserine. In terms of domain architecture, Thioredoxin spans 6 to 165 (AKIGYPAPNF…IIRLVQAFQF (160 aa)). N6-acetyllysine; alternate is present on Lys-7. Residue Lys-7 forms a Glycyl lysine isopeptide (Lys-Gly) (interchain with G-Cter in SUMO2); alternate linkage. Lys-16 and Lys-27 each carry N6-acetyllysine. A Phosphoserine modification is found at Ser-32. Lys-35 is modified (N6-acetyllysine; alternate). Lys-35 carries the post-translational modification N6-succinyllysine; alternate. The active-site Cysteine sulfenic acid (-SOH) intermediate is Cys-52. Thr-90 bears the Phosphothreonine mark. Lys-120 participates in a covalent cross-link: Glycyl lysine isopeptide (Lys-Gly) (interchain with G-Cter in SUMO2). N6-acetyllysine is present on Lys-136. A Glycyl lysine isopeptide (Lys-Gly) (interchain with G-Cter in SUMO1) cross-link involves residue Lys-185. An N6-acetyllysine modification is found at Lys-197.

Belongs to the peroxiredoxin family. AhpC/Prx1 subfamily. Homodimer; disulfide-linked, upon oxidation. 5 homodimers assemble to form a ring-like decamer. Interacts with GDPD5; forms a mixed-disulfide with GDPD5. Interacts with SESN1 and SESN2. Interacts with FAM107A. In terms of processing, phosphorylated on Thr-90 during the M-phase, which leads to a decrease in enzymatic activity. Acetylation increases reducing activity and resistance to superoxidation. Deacetylated by HDAC6 which decreases reducing activity. As to expression, found in various tissues; high concentration in liver.

Its subcellular location is the cytoplasm. It catalyses the reaction a hydroperoxide + [thioredoxin]-dithiol = an alcohol + [thioredoxin]-disulfide + H2O. Its function is as follows. Thiol-specific peroxidase that catalyzes the reduction of hydrogen peroxide and organic hydroperoxides to water and alcohols, respectively. Plays a role in cell protection against oxidative stress by detoxifying peroxides and as sensor of hydrogen peroxide-mediated signaling events. Might participate in the signaling cascades of growth factors and tumor necrosis factor-alpha by regulating the intracellular concentrations of H(2)O(2). Reduces an intramolecular disulfide bond in GDPD5 that gates the ability to GDPD5 to drive postmitotic motor neuron differentiation. This chain is Peroxiredoxin-1 (Prdx1), found in Mus musculus (Mouse).